A 166-amino-acid chain; its full sequence is CDP-archaeol synthase (166 aa).

Transmembrane regions (helical) follow at residues 7–27, 55–75, 78–98, 116–136, and 138–158; these read LLLSILIYLPAFVANGSGPFI, LIVALTFGTTVGVIISKFFTA, TLISFLESLFAMIGDMIGAFI, LDFVLGASLILVLMRVNITWY, and FLFICGLAFFLHQGTNYVAYL.

It belongs to the CDP-archaeol synthase family. Mg(2+) is required as a cofactor.

The protein localises to the cell membrane. It catalyses the reaction 2,3-bis-O-(geranylgeranyl)-sn-glycerol 1-phosphate + CTP + H(+) = CDP-2,3-bis-O-(geranylgeranyl)-sn-glycerol + diphosphate. Its pathway is membrane lipid metabolism; glycerophospholipid metabolism. In terms of biological role, catalyzes the formation of CDP-2,3-bis-(O-geranylgeranyl)-sn-glycerol (CDP-archaeol) from 2,3-bis-(O-geranylgeranyl)-sn-glycerol 1-phosphate (DGGGP) and CTP. This reaction is the third ether-bond-formation step in the biosynthesis of archaeal membrane lipids. The chain is CDP-archaeol synthase from Saccharolobus islandicus (strain L.S.2.15 / Lassen #1) (Sulfolobus islandicus).